The chain runs to 264 residues: Phosphonoacetaldehyde hydrolase (264 aa).

The Nucleophile role is filled by Asp9. The Mg(2+) site is built by Asp9 and Ala11. Lys50 acts as the Schiff-base intermediate with substrate in catalysis. Asp183 lines the Mg(2+) pocket.

Belongs to the HAD-like hydrolase superfamily. PhnX family. Homodimer. Mg(2+) serves as cofactor.

The catalysed reaction is phosphonoacetaldehyde + H2O = acetaldehyde + phosphate + H(+). In terms of biological role, involved in phosphonate degradation. In Bacillus anthracis, this protein is Phosphonoacetaldehyde hydrolase.